We begin with the raw amino-acid sequence, 538 residues long: Pentatricopeptide repeat-containing protein At1g33350 (538 aa).

10 PPR repeats span residues 87–123, 125–159, 160–191, 192–226, 227–253, 259–293, 294–324, 325–359, 363–398, and 399–433; these read NTHL…SVPR, NHFI…GFHL, YVVV…MSER, NVVS…DVPS, WNAI…MINE, NEVT…DLSS, DVFV…ASKK, SLTA…NIND, DHIT…GIEP, and RIEH…ADEA. The interval 434 to 509 is type E motif; that stretch reads IWGSLLNACK…PPGWSRIEID (76 aa).

It belongs to the PPR family. PCMP-E subfamily.

The chain is Pentatricopeptide repeat-containing protein At1g33350 (PCMP-E57) from Arabidopsis thaliana (Mouse-ear cress).